The sequence spans 2988 residues: NBPF family member NBPF14 (2988 aa).

Residues 75 to 119 (RQFKEEKLAEQLKQAEELRQYKVLVHSQERELTQLREKLREGRDA) adopt a coiled-coil conformation. Disordered regions lie at residues 161-200 (KLSP…SKVP), 451-474 (EKVQ…PEDS), and 520-566 (WEDA…EGYS). A compositionally biased stretch (acidic residues) spans 165 to 177 (ENDEDEDEDVQVE). 32 consecutive Olduvai domains span residues 165–259 (ENDE…NILP), 436–528 (ENDN…HIIP), 529–600 (ENES…VDIG), 601–692 (RHRW…PSCP), 695–750 (SREL…LDVD), 751–843 (RIKK…RSKK), 844–919 (ERRR…LDVD), 920–1012 (RIKK…RSKK), 1013–1105 (ERRR…PSCP), 1108–1163 (SREL…LDVD), 1164–1256 (RIKK…RSKK), 1257–1349 (ERRR…PSCP), 1352–1407 (SREL…LDVD), 1408–1500 (RIKK…RSKK), 1501–1593 (ERRR…PSCP), 1596–1651 (SREL…LDVD), 1652–1744 (RFKK…RSKK), 1745–1837 (ERRR…PSCP), 1840–1895 (SREL…LDVD), 1896–1988 (RIKK…RSKK), 1989–2081 (ERRR…PSCP), 2084–2139 (SREL…LDVD), 2140–2232 (RIKK…RSKK), 2233–2325 (ERRR…PSCP), 2328–2383 (SREL…LDVD), 2384–2476 (RIKK…RSKK), 2477–2569 (ERRR…PSCP), 2572–2627 (SREL…LDVD), 2628–2720 (RIKK…RSKK), 2721–2813 (ERRR…PSCP), 2816–2889 (SREL…RSKK), and 2890–2988 (ERRR…IFPQ). The segment covering 190 to 200 (EVQKAEESKVP) has biased composition (basic and acidic residues). Acidic residues-rich tracts occupy residues 530 to 539 (NESDDEEEEE) and 550 to 562 (ESEE…ESWD). Disordered regions lie at residues 754–773 (KDEE…SREL), 828–871 (EKKG…LDEK), and 999–1038 (KGKG…ELLD). Basic residues-rich tracts occupy residues 831-849 (GKGK…RRGR) and 1000-1018 (GKGK…RRGR). The interval 1243–1282 (KGKGKKRRGRRSKKERRRGRKEGEEDQNPPCPRLSRELLD) is disordered. Over residues 1244-1262 (GKGKKRRGRRSKKERRRGR) the composition is skewed to basic residues. The disordered stretch occupies residues 1487–1521 (KGKGKKRRGRRSKKERRRGRKEGEEDQNPPCPRLS). Over residues 1488–1506 (GKGKKRRGRRSKKERRRGR) the composition is skewed to basic residues. The interval 1731-1770 (KGKGKKRRGRRSKKERRRGRKEGEEDQNPPCPRLSRELLD) is disordered. The span at 1732–1750 (GKGKKRRGRRSKKERRRGR) shows a compositional bias: basic residues. The interval 1975-2014 (KGKGKKRRGRRSKKERRRGRKEGEEDQNPPCPRLSRELLD) is disordered. A compositionally biased stretch (basic residues) spans 1976–1994 (GKGKKRRGRRSKKERRRGR). The tract at residues 2219–2258 (KGKGKKRRGRRSKKERRRGRKEGEEDQNPPCPRLSRELLD) is disordered. Residues 2220 to 2238 (GKGKKRRGRRSKKERRRGR) are compositionally biased toward basic residues. Positions 2463-2502 (KGKGKKRRGRRSKKERRRGRKEGEEDQNPPCPRLSRELLD) are disordered. Basic residues predominate over residues 2464 to 2482 (GKGKKRRGRRSKKERRRGR). Disordered stretches follow at residues 2707–2745 (KGKG…RELL) and 2877–2909 (GKGK…CPRL). Basic residues-rich tracts occupy residues 2708–2726 (GKGK…RRGR) and 2877–2895 (GKGK…RRGR).

The protein belongs to the NBPF family. As to expression, expressed in spleen and fetal liver.

The protein resides in the cytoplasm. This chain is NBPF family member NBPF14, found in Homo sapiens (Human).